The sequence spans 100 residues: MAKKSMIAREVKRKKLVKKYAAKRKSLLDEFNAAKDPMERLEIHRKIQGLPRNSAPNRVRNRCWATGKPRGVYRDFGLCRNQLRQRAHNGELPGVVKSSW.

Belongs to the universal ribosomal protein uS14 family. Part of the 30S ribosomal subunit. Contacts proteins S3 and S10.

In terms of biological role, binds 16S rRNA, required for the assembly of 30S particles and may also be responsible for determining the conformation of the 16S rRNA at the A site. In Prochlorococcus marinus (strain MIT 9215), this protein is Small ribosomal subunit protein uS14.